A 277-amino-acid chain; its full sequence is Cell death abnormality protein 2 (277 aa).

One can recognise an SH2 domain in the interval 14 to 112 (FYFPGMSRED…EASLLSAYKK (99 aa)). The 61-residue stretch at 113–173 (PIIEVVVGTF…PANYVQVQSG (61 aa)) folds into the SH3 1 domain. A disordered region spans residues 179 to 217 (RISKGTSQSSIGSSGNGAERFSSTSTSSENAEAHPTLPT). Residues 182–206 (KGTSQSSIGSSGNGAERFSSTSTSS) show a composition bias toward low complexity. Positions 214-275 (TLPTTAKVTF…PFTYIRFNTA (62 aa)) constitute an SH3 2 domain.

Belongs to the CRK family. Interacts with ced-5 (via C-terminus which contains a candidate SH3-binding, proline-rich region). Forms a ternary complex with ced-5 and ced-12. Interacts (via SH-2 domain) with src-1 (when activated and phosphorylated at 'Tyr-416').

Required for cell migration and engulfment of cell corpses but not for programmed cell death/apoptosis. Also has a role in the migration of the 2 gonadal distal tip cells (DTCs). The polypeptide is Cell death abnormality protein 2 (Caenorhabditis briggsae).